The sequence spans 411 residues: Arginine deiminase (411 aa).

The Amidino-cysteine intermediate role is filled by C401.

This sequence belongs to the arginine deiminase family.

The protein resides in the cytoplasm. It carries out the reaction L-arginine + H2O = L-citrulline + NH4(+). It participates in amino-acid degradation; L-arginine degradation via ADI pathway; carbamoyl phosphate from L-arginine: step 1/2. The chain is Arginine deiminase from Staphylococcus haemolyticus (strain JCSC1435).